The chain runs to 529 residues: Delayed-rectifier potassium channel regulatory subunit KCNS1 (529 aa).

Over 1 to 217 (MLMLLVRGTR…LTMENPGYSL (217 aa)) the chain is Cytoplasmic. Residues 218–239 (PSKLFSCVSISVVLASIAAMCI) traverse the membrane as a helical segment. Over 240–270 (HSLPEYQAREAAAAVAAVAAGRSAEGVRDDP) the chain is Extracellular. A helical transmembrane segment spans residues 271 to 293 (VLRRLEYFCIAWFSFEVSSRLLL). Topologically, residues 294–304 (APSTRNFFCHP) are cytoplasmic. A helical transmembrane segment spans residues 305–322 (LNLIDIVSVLPFYLTLLA). At 323–340 (GAALGDHGGTGGKEFGHL) the chain is on the extracellular side. A helical; Voltage-sensor transmembrane segment spans residues 341–361 (GKVVQVFRLMRIFRVLKLARH). Topologically, residues 362–376 (STGLRSLGATLKHSY) are cytoplasmic. A helical membrane pass occupies residues 377–398 (REVGILLLYLAVGVSVFSGVAY). The Extracellular portion of the chain corresponds to 399-411 (TAEKEEHVGFDTI). Positions 412 to 423 (PACWWWGTVSMT) form an intramembrane region, helical. Residues 424 to 429 (TVGYGD) carry the Selectivity filter motif. Residues 424 to 431 (TVGYGDVV) lie within the membrane without spanning it. Over 432-438 (PVTVAGK) the chain is Extracellular. A helical transmembrane segment spans residues 439–467 (LAASGCILGGILVVALPITIIFNKFSHFY). The Cytoplasmic portion of the chain corresponds to 468–529 (RRQKALEAAV…PSEPPHSQMY (62 aa)). A disordered region spans residues 494–529 (GVSEASLETSRETSQEGRSADLETQVPSEPPHSQMY). Over residues 502–514 (TSRETSQEGRSAD) the composition is skewed to basic and acidic residues.

The protein belongs to the potassium channel family. S (TC 1.A.1.2) subfamily. Kv9.1/KCNS1 sub-subfamily. Heterotetramer with KCNB1. Heterotetramer with KCNB2. Does not form homomultimers.

Its subcellular location is the cell membrane. In terms of biological role, potassium channel regulatory subunit that modulate the delayed rectifier voltage-gated potassium channel activity of KCNB1 and KCNB2 by altering their kinetics, expression levels, and shifting the half-inactivation potential to more polarized values. While it does not form functional channels on its own, it can form functional heterotetrameric channels with KCNB1 and KCNB2. Each regulatory subunit has unique regulatory properties that can lead to extensive inhibition, significant changes in kinetics, and/or substantial shifts in the voltage dependencies of the inactivation process. The protein is Delayed-rectifier potassium channel regulatory subunit KCNS1 of Aotus nancymaae (Ma's night monkey).